Here is a 2661-residue protein sequence, read N- to C-terminus: 3-methylorcinaldehyde synthase tropA (2661 aa).

The interval 14–271 (LLFGSQSLSF…HWSGHEAEVD (258 aa)) is N-terminal acylcarrier protein transacylase domain (SAT). A Ketosynthase family 3 (KS3) domain is found at 380 to 796 (GDDIAIVGAS…GSNASMVITQ (417 aa)). Residues cysteine 545, histidine 680, and histidine 719 each act as for beta-ketoacyl synthase activity in the active site. A malonyl-CoA:ACP transacylase (MAT) domain region spans residues 901-1211 (LCFGGQVSTF…QAMSITTDKG (311 aa)). The active-site For acyl/malonyl transferase activity is serine 988. The segment at 1283–1425 (PDTILSFVGY…GTLVVVPMED (143 aa)) is N-terminal hotdog fold. Residues 1283–1600 (PDTILSFVGY…FVRIPRKGLA (318 aa)) enclose the PKS/mFAS DH domain. The tract at residues 1288–1599 (SFVGYQDSNK…QFVRIPRKGL (312 aa)) is product template (PT) domain. Histidine 1318 acts as the Proton acceptor; for dehydratase activity in catalysis. The tract at residues 1453–1600 (AEEILQGRTI…FVRIPRKGLA (148 aa)) is C-terminal hotdog fold. Aspartate 1509 functions as the Proton donor; for dehydratase activity in the catalytic mechanism. The segment at 1614 to 1656 (ATNAQSRAIPPPSTNTTQSSSQQTPIPKAAAPKKEKKRPGNPK) is disordered. The segment covering 1627 to 1643 (TNTTQSSSQQTPIPKAA) has biased composition (low complexity). A Carrier 1 domain is found at 1654 to 1731 (NPKLDVLPKL…QLVRVVESIV (78 aa)). Serine 1691 carries the post-translational modification O-(pantetheine 4'-phosphoryl)serine. The interval 1734 to 1762 (EGSETSNLSSDDDDENGTPSTPETDLSDA) is disordered. A Carrier 2 domain is found at 1764–1841 (VDAVVDNAEL…DLRQTAPGAA (78 aa)). At serine 1801 the chain carries O-(pantetheine 4'-phosphoryl)serine. The methyltransferase (CMeT) domain stretch occupies residues 1998-2231 (QYQNVNELIF…GFGRVDWSDG (234 aa)). Residues 2271–2659 (GVDLLSPAIR…FISYWRSISF (389 aa)) are thioesterase (TE) domain.

Its pathway is secondary metabolite biosynthesis. Its function is as follows. Non-reducing polyketide synthase; part of the gene cluster that mediates the biosynthesis of the tropolone class of fungal maleic anhydrides. The pathway begins with the synthesis of 3-methylorcinaldehyde by the non-reducing polyketide synthase (PKS) tropA. 3-methylorcinaldehyde is the substrate for the FAD-dependent monooxygenase tropB to yield a dearomatized hydroxycyclohexadione. The 2-oxoglutarate-dependent dioxygenase tropC then performs the oxidative ring expansion to provide the first tropolone metabolite stipitaldehyde. Trop D converts stipitaldehyde into stipitacetal which is in turn converted to stipitalide by the short-chain dehydrogenase/reductase tropE. The next steps involve tropF, tropG, tropH, tropI and tropJ to form successive tropolone maleic anhydrides including stipitaldehydic, stipitatonic and stipitatic acids. This chain is 3-methylorcinaldehyde synthase tropA, found in Talaromyces stipitatus (strain ATCC 10500 / CBS 375.48 / QM 6759 / NRRL 1006) (Penicillium stipitatum).